A 179-amino-acid polypeptide reads, in one-letter code: Outer-membrane lipoprotein carrier protein (179 aa).

An N-terminal signal peptide occupies residues 1 to 22 (MEVLRRYVLVFTSLCMTLFAWG).

This sequence belongs to the LolA family. As to quaternary structure, monomer.

The protein localises to the periplasm. In terms of biological role, participates in the translocation of lipoproteins from the inner membrane to the outer membrane. Only forms a complex with a lipoprotein if the residue after the N-terminal Cys is not an aspartate (The Asp acts as a targeting signal to indicate that the lipoprotein should stay in the inner membrane). The sequence is that of Outer-membrane lipoprotein carrier protein from Helicobacter hepaticus (strain ATCC 51449 / 3B1).